A 346-amino-acid polypeptide reads, in one-letter code: Biotin synthase (346 aa).

The region spanning 38 to 256 is the Radical SAM core domain; sequence QQVQVSTLLS…IAVARIMMPT (219 aa). [4Fe-4S] cluster is bound by residues Cys53, Cys57, and Cys60. [2Fe-2S] cluster is bound by residues Cys97, Cys128, Cys188, and Arg260.

The protein belongs to the radical SAM superfamily. Biotin synthase family. Homodimer. It depends on [4Fe-4S] cluster as a cofactor. [2Fe-2S] cluster is required as a cofactor.

It carries out the reaction (4R,5S)-dethiobiotin + (sulfur carrier)-SH + 2 reduced [2Fe-2S]-[ferredoxin] + 2 S-adenosyl-L-methionine = (sulfur carrier)-H + biotin + 2 5'-deoxyadenosine + 2 L-methionine + 2 oxidized [2Fe-2S]-[ferredoxin]. The protein operates within cofactor biosynthesis; biotin biosynthesis; biotin from 7,8-diaminononanoate: step 2/2. Catalyzes the conversion of dethiobiotin (DTB) to biotin by the insertion of a sulfur atom into dethiobiotin via a radical-based mechanism. This Salmonella agona (strain SL483) protein is Biotin synthase.